The following is a 268-amino-acid chain: Small ribosomal subunit protein uS2 (268 aa).

This sequence belongs to the universal ribosomal protein uS2 family.

This Caulobacter vibrioides (strain ATCC 19089 / CIP 103742 / CB 15) (Caulobacter crescentus) protein is Small ribosomal subunit protein uS2.